We begin with the raw amino-acid sequence, 428 residues long: C4-dicarboxylate transport protein (428 aa).

The next 9 membrane-spanning stretches (helical) occupy residues 8–28 (SLYVQVLTAIAIGILLGHFYP), 44–64 (LIKMVIAPVIFCTVVTGIAGM), 76–96 (VALLYFEVVSTIALIIGLIIV), 142–162 (IGAFASGNILQVLLFAVLFGF), 184–204 (VIFGIINMIMRLAPIGAFGAM), 222–242 (LIICFYITCILFVVVVLGSIA), 289–309 (VVGLVIPTGYSFNLDGTSIYL), 326–346 (IFHQITLLVVLLLSSKGAAGV), and 352–372 (IVLAATISAVGHLPVAGLALI).

The protein belongs to the dicarboxylate/amino acid:cation symporter (DAACS) (TC 2.A.23) family.

It is found in the cell inner membrane. In terms of biological role, responsible for the transport of dicarboxylates such as succinate, fumarate, and malate from the periplasm across the membrane. In Klebsiella pneumoniae subsp. pneumoniae (strain ATCC 700721 / MGH 78578), this protein is C4-dicarboxylate transport protein.